Consider the following 342-residue polypeptide: Foldase protein PrsA (342 aa).

Residues 1 to 22 (MVSVKKIVASALVGVLMFSAVG) form the signal peptide. Cys23 carries the N-palmitoyl cysteine lipid modification. The S-diacylglycerol cysteine moiety is linked to residue Cys23. Residues 190 to 284 (AKGVLARHLL…FGYHIIQAGA (95 aa)) enclose the PpiC domain.

The protein belongs to the PrsA family.

It is found in the cell membrane. It carries out the reaction [protein]-peptidylproline (omega=180) = [protein]-peptidylproline (omega=0). In terms of biological role, plays a major role in protein secretion by helping the post-translocational extracellular folding of several secreted proteins. The sequence is that of Foldase protein PrsA from Clostridium perfringens (strain SM101 / Type A).